The chain runs to 104 residues: uncharacterized protein (104 aa).

This is an uncharacterized protein from Homo sapiens (Human).